A 646-amino-acid polypeptide reads, in one-letter code: Protein SENSITIVE TO UV 2 (646 aa).

Residues 42–70 are disordered; the sequence is PAPPPSTKISSSLSHPMQLQSSAGQQRKQ. Residues 48–70 show a composition bias toward polar residues; sequence TKISSSLSHPMQLQSSAGQQRKQ. The Nuclear localization signal motif lies at 119–126; the sequence is NRRCDSEK. Positions 123-157 form a coiled coil; it reads DSEKDLEIDRLKKELERVSKQLLDVEQECSQLKKG. Residues 376–646 form the Phosphatase tensin-type domain; sequence KRTEQDVKQE…VFAFLGDNTI (271 aa).

The protein belongs to the serpin family. As to quaternary structure, forms multimers through the coiled-coil domain. Post-translationally, probably phosphorylated by ATR. As to expression, accumulates throughout the root tip.

It is found in the nucleus. Its subcellular location is the cytoplasm. Functionally, required for tolerance to DNA-damaging and cross-linking agents such as UVB irradiation, gamma-radiation, aphidicolin, ionizing radiation and hydroxyurea (HU), cisplatin (CDDP) and mitomycin C (MMC). Involved in cell-cycle G2/M arrest in response to DNA damage. Required for aluminum-dependent gene regulation and root growth inhibition in an ATR-dependent manner by halting cell cycle progression and triggering loss of the quiescent center (QC). The protein is Protein SENSITIVE TO UV 2 of Arabidopsis thaliana (Mouse-ear cress).